Here is a 380-residue protein sequence, read N- to C-terminus: 12-oxophytodienoate reductase 1 (380 aa).

FMN-binding positions include 35-37, Ala-68, and Gln-110; that span reads PLT. 182–185 contributes to the substrate binding site; the sequence is HGAH. Residue Tyr-187 is the Proton donor of the active site. Arg-234 contacts FMN. Residue Arg-275 participates in substrate binding. Residues Gly-305 and 326–327 each bind FMN; that span reads GR.

It belongs to the NADH:flavin oxidoreductase/NADH oxidase family. Requires FMN as cofactor.

The enzyme catalyses (1S,2S)-OPC-8 + NADP(+) = (9S,13S,15Z)-12-oxophyto-10,15-dienoate + NADPH + H(+). Its pathway is lipid metabolism; oxylipin biosynthesis. Its function is as follows. Probably involved in the biosynthesis or metabolism of oxylipin signaling molecules. In vitro, reduces cis(-)-12-oxophytodienoic acid (cis(-)-OPDA) and to cis(-)-OPC-8:0. This is 12-oxophytodienoate reductase 1 from Oryza sativa subsp. japonica (Rice).